The following is an 816-amino-acid chain: Leucine--tRNA ligase (816 aa).

The 'HIGH' region signature appears at 40 to 51 (SYPSGSQLHAGH). The 'KMSKS' region signature appears at 576 to 580 (KMSKS). K579 is an ATP binding site.

It belongs to the class-I aminoacyl-tRNA synthetase family.

It is found in the cytoplasm. It catalyses the reaction tRNA(Leu) + L-leucine + ATP = L-leucyl-tRNA(Leu) + AMP + diphosphate. This is Leucine--tRNA ligase from Clostridium perfringens (strain ATCC 13124 / DSM 756 / JCM 1290 / NCIMB 6125 / NCTC 8237 / Type A).